We begin with the raw amino-acid sequence, 665 residues long: Target of rapamycin complex 2 subunit sin1 (665 aa).

The residue at position 62 (serine 62) is a Phosphoserine. Composition is skewed to polar residues over residues isoleucine 65–valine 83 and tyrosine 100–serine 109. The interval isoleucine 65–glycine 112 is disordered. Serine 133 is modified (phosphoserine). The CRIM domain maps to threonine 255 to glutamine 392. The disordered stretch occupies residues tyrosine 395–aspartate 433. Phosphoserine is present on residues serine 404, serine 490, serine 502, and serine 530. The segment at arginine 517–glycine 537 is disordered. The segment covering serine 522–tyrosine 536 has biased composition (polar residues). Residues threonine 558–asparagine 659 form the SIN1-type PH domain.

The protein belongs to the SIN1 family. In terms of assembly, the target of rapamycin complex 2 (TORC2) is composed of at least bit61, pop3/wat1, sin1, ste20 and tor1. Interacts with the sty1 MAP kinase. Phosphorylated; under environmental stress. Either Ser-61 or Ser-62 and Ser-298, Ser-299 or Ser-301 are phosphorylated as well.

In terms of biological role, component of the mechanistic target of rapamycin complex 2 (mTORC2), which regulates multiple cellular processes to control cell growth in response to environmental signals. In response to signals, TORC2 phosphorylates AGC protein kinase family members, such as gad8. TORC2 is required for cell survival under various stress conditions. TORC2 positively controls G1 cell-cycle arrest, sexual development and amino acid uptake. Positively regulates amino acid uptake through the control of expression of amino acid permeases. Within the mTORC2 complex, sin1 acts as a substrate adapter which recognizes and binds AGC protein kinase family members for phosphorylation by tor1. This chain is Target of rapamycin complex 2 subunit sin1, found in Schizosaccharomyces pombe (strain 972 / ATCC 24843) (Fission yeast).